The primary structure comprises 134 residues: Putative pre-16S rRNA nuclease (134 aa).

It belongs to the YqgF nuclease family.

It localises to the cytoplasm. Its function is as follows. Could be a nuclease involved in processing of the 5'-end of pre-16S rRNA. This chain is Putative pre-16S rRNA nuclease, found in Helicobacter pylori (strain ATCC 700392 / 26695) (Campylobacter pylori).